We begin with the raw amino-acid sequence, 310 residues long: HPr kinase/phosphorylase (310 aa).

Catalysis depends on residues H138 and K159. G153–S160 contacts ATP. A Mg(2+)-binding site is contributed by S160. The Proton acceptor; for phosphorylation activity. Proton donor; for dephosphorylation activity role is filled by D177. The segment at L201–N210 is important for the catalytic mechanism of both phosphorylation and dephosphorylation. E202 is a Mg(2+) binding site. R243 is an active-site residue. Positions P264 to R269 are important for the catalytic mechanism of dephosphorylation.

It belongs to the HPrK/P family. Homohexamer. Requires Mg(2+) as cofactor.

It catalyses the reaction [HPr protein]-L-serine + ATP = [HPr protein]-O-phospho-L-serine + ADP + H(+). It carries out the reaction [HPr protein]-O-phospho-L-serine + phosphate + H(+) = [HPr protein]-L-serine + diphosphate. Its function is as follows. Catalyzes the ATP- as well as the pyrophosphate-dependent phosphorylation of a specific serine residue in HPr, a phosphocarrier protein of the phosphoenolpyruvate-dependent sugar phosphotransferase system (PTS). HprK/P also catalyzes the pyrophosphate-producing, inorganic phosphate-dependent dephosphorylation (phosphorolysis) of seryl-phosphorylated HPr (P-Ser-HPr). The two antagonistic activities of HprK/P are regulated by several intracellular metabolites, which change their concentration in response to the absence or presence of rapidly metabolisable carbon sources (glucose, fructose, etc.) in the growth medium. Also phosphorylates/dephosphorylates the HPr-like catabolite repression protein crh on a specific serine residue. Therefore, by controlling the phosphorylation state of HPr and crh, HPrK/P is a sensor enzyme that plays a major role in the regulation of carbon metabolism and sugar transport: it mediates carbon catabolite repression (CCR), and regulates PTS-catalyzed carbohydrate uptake and inducer exclusion. The chain is HPr kinase/phosphorylase from Bacillus velezensis (strain DSM 23117 / BGSC 10A6 / LMG 26770 / FZB42) (Bacillus amyloliquefaciens subsp. plantarum).